A 135-amino-acid polypeptide reads, in one-letter code: uncharacterized protein (135 aa).

A run of 4 helical transmembrane segments spans residues 7–25, 29–51, 64–85, and 89–108; these read WSAA…EWTI, ILLT…TGNI, VFIF…EVGI, and ALIF…ISIF.

Belongs to the bacteriophage holin family. Cp-1 holin subfamily.

It localises to the cell membrane. This is an uncharacterized protein from Halalkalibacterium halodurans (strain ATCC BAA-125 / DSM 18197 / FERM 7344 / JCM 9153 / C-125) (Bacillus halodurans).